The primary structure comprises 211 residues: Large ribosomal subunit protein uL3 (211 aa).

The residue at position 150 (Gln150) is an N5-methylglutamine.

It belongs to the universal ribosomal protein uL3 family. Part of the 50S ribosomal subunit. Forms a cluster with proteins L14 and L19. Post-translationally, methylated by PrmB.

Functionally, one of the primary rRNA binding proteins, it binds directly near the 3'-end of the 23S rRNA, where it nucleates assembly of the 50S subunit. The chain is Large ribosomal subunit protein uL3 from Pseudomonas savastanoi pv. phaseolicola (strain 1448A / Race 6) (Pseudomonas syringae pv. phaseolicola (strain 1448A / Race 6)).